Here is a 683-residue protein sequence, read N- to C-terminus: DNA-directed RNA polymerase subunit beta' (683 aa).

Residues C69, C71, C87, and C90 each contribute to the Zn(2+) site. Mg(2+) is bound by residues D489, D491, and D493.

Belongs to the RNA polymerase beta' chain family. RpoC1 subfamily. In terms of assembly, in plastids the minimal PEP RNA polymerase catalytic core is composed of four subunits: alpha, beta, beta', and beta''. When a (nuclear-encoded) sigma factor is associated with the core the holoenzyme is formed, which can initiate transcription. The cofactor is Mg(2+). Zn(2+) is required as a cofactor.

It is found in the plastid. It localises to the chloroplast. It catalyses the reaction RNA(n) + a ribonucleoside 5'-triphosphate = RNA(n+1) + diphosphate. DNA-dependent RNA polymerase catalyzes the transcription of DNA into RNA using the four ribonucleoside triphosphates as substrates. This Triticum aestivum (Wheat) protein is DNA-directed RNA polymerase subunit beta'.